Consider the following 920-residue polypeptide: Urea transporter 2 (920 aa).

A disordered region spans residues 25 to 57 (FTSPSWPSTSPDTHPALPLLEMPEEKDLRSSNE). Residues 26 to 39 (TSPSWPSTSPDTHP) are compositionally biased toward low complexity. A compositionally biased stretch (basic and acidic residues) spans 47–57 (PEEKDLRSSNE). 9 helical membrane-spanning segments follow: residues 151–170 (WWTI…ALAL), 176–196 (AIAS…MAVF), 204–224 (WWLL…SSAL), 233–253 (LPVF…ATGH), 272–291 (ITWT…VGVG), 302–322 (GGVF…HAAI), 346–366 (WSYN…ALTW), 370–390 (LLAL…SNIM), and 392–412 (VVGV…FLLL). The segment at 446–467 (EKAPSGGGGEHPPTAGPKVEEG) is disordered. Ser477 carries the phosphoserine modification. Helical transmembrane passes span 600-620 (GILI…SGCL), 638-658 (AIAA…MAVF), 666-686 (WWLL…SSAL), and 695-715 (LPVF…ATGH). N-linked (GlcNAc...) asparagine glycosylation occurs at Asn733. 4 consecutive transmembrane segments (helical) span residues 764-784 (GGIF…HAAI), 803-823 (IYFG…GGMF), 832-852 (LLAI…ANML), and 854-874 (VFGL…FLLL).

The protein belongs to the urea transporter family. Interacts with SNAPIN which enhances its urea transport activity. As to expression, epressed in the inner medulla of the kidney (at protein level). In terms of tissue distribution, expressed in the kidney.

It is found in the apical cell membrane. It localises to the cell membrane. It catalyses the reaction urea(in) = urea(out). Its activity is regulated as follows. Inhibited by phloretin. Mediates the transport of urea driven by a concentration gradient across the cell membrane of the renal inner medullary collecting duct which is critical to the urinary concentrating mechanism. Functionally, mediates the transport of urea driven by a concentration gradient across the cell membrane of the kidney inner medullary collecting duct which is critical to the urinary concentrating mechanism. The polypeptide is Urea transporter 2 (SLC14A2) (Homo sapiens (Human)).